Here is a 72-residue protein sequence, read N- to C-terminus: Large ribosomal subunit protein uL30 (72 aa).

This sequence belongs to the universal ribosomal protein uL30 family. In terms of assembly, part of the 50S ribosomal subunit.

The sequence is that of Large ribosomal subunit protein uL30 from Mycobacterium ulcerans (strain Agy99).